The primary structure comprises 343 residues: L-threonine 3-dehydrogenase (343 aa).

Residue Cys40 coordinates Zn(2+). Active-site charge relay system residues include Thr42 and His45. Residues His65, Glu66, Cys95, Cys98, Cys101, and Cys109 each contribute to the Zn(2+) site. Residues Ile177, Asp197, Arg202, 264–266 (LGI), and 288–289 (IY) each bind NAD(+).

The protein belongs to the zinc-containing alcohol dehydrogenase family. In terms of assembly, homotetramer. Zn(2+) is required as a cofactor.

The protein resides in the cytoplasm. The enzyme catalyses L-threonine + NAD(+) = (2S)-2-amino-3-oxobutanoate + NADH + H(+). It functions in the pathway amino-acid degradation; L-threonine degradation via oxydo-reductase pathway; glycine from L-threonine: step 1/2. In terms of biological role, catalyzes the NAD(+)-dependent oxidation of L-threonine to 2-amino-3-ketobutyrate. This is L-threonine 3-dehydrogenase from Aliivibrio salmonicida (strain LFI1238) (Vibrio salmonicida (strain LFI1238)).